The primary structure comprises 147 residues: Large ribosomal subunit protein uL22c (147 aa).

This sequence belongs to the universal ribosomal protein uL22 family. As to quaternary structure, part of the 50S ribosomal subunit.

The protein localises to the plastid. In terms of biological role, this protein binds specifically to 23S rRNA. Its function is as follows. The globular domain of the protein is located near the polypeptide exit tunnel on the outside of the subunit, while an extended beta-hairpin is found that lines the wall of the exit tunnel in the center of the 70S ribosome. This chain is Large ribosomal subunit protein uL22c (rpl22), found in Cuscuta gronovii (Common dodder).